The chain runs to 159 residues: ATP synthase subunit b (159 aa).

A helical membrane pass occupies residues 4-24; sequence VGINGTLIVQLVTFVILVALL.

Belongs to the ATPase B chain family. As to quaternary structure, F-type ATPases have 2 components, F(1) - the catalytic core - and F(0) - the membrane proton channel. F(1) has five subunits: alpha(3), beta(3), gamma(1), delta(1), epsilon(1). F(0) has three main subunits: a(1), b(2) and c(10-14). The alpha and beta chains form an alternating ring which encloses part of the gamma chain. F(1) is attached to F(0) by a central stalk formed by the gamma and epsilon chains, while a peripheral stalk is formed by the delta and b chains.

Its subcellular location is the cell inner membrane. In terms of biological role, f(1)F(0) ATP synthase produces ATP from ADP in the presence of a proton or sodium gradient. F-type ATPases consist of two structural domains, F(1) containing the extramembraneous catalytic core and F(0) containing the membrane proton channel, linked together by a central stalk and a peripheral stalk. During catalysis, ATP synthesis in the catalytic domain of F(1) is coupled via a rotary mechanism of the central stalk subunits to proton translocation. Functionally, component of the F(0) channel, it forms part of the peripheral stalk, linking F(1) to F(0). This is ATP synthase subunit b from Acidithiobacillus ferridurans.